A 131-amino-acid polypeptide reads, in one-letter code: M-zodatoxin-Lt8o (131 aa).

The N-terminal stretch at Met-1–Ser-20 is a signal peptide. The propeptide occupies Lys-21–Arg-60.

It belongs to the cationic peptide 06 (cytoinsectotoxin) family. Expressed by the venom gland.

The protein localises to the secreted. In terms of biological role, insecticidal, cytolytic and antimicrobial peptide. Forms voltage-dependent, ion-permeable channels in membranes. At high concentration causes cell membrane lysis. This Lachesana tarabaevi (Spider) protein is M-zodatoxin-Lt8o (cit 1-14).